We begin with the raw amino-acid sequence, 184 residues long: Phosphonoformate cytidylyltransferase (184 aa).

It catalyses the reaction phosphonoformate + CTP = CMP-5'-phosphonoformate + diphosphate. It functions in the pathway secondary metabolite biosynthesis; bialaphos biosynthesis. Catalyzes the displacement of the beta- and gamma-phosphates of CTP by phosphonoformate to produce CMP-5'-phosphonoformate, an intermediate in the biosynthesis of phosphinothricin tripeptide (PTT), also known as bialaphos (BA), a natural-product antibiotic and potent herbicide. This chain is Phosphonoformate cytidylyltransferase, found in Streptomyces viridochromogenes (strain DSM 40736 / JCM 4977 / BCRC 1201 / Tue 494).